A 130-amino-acid polypeptide reads, in one-letter code: Small ribosomal subunit protein uS9 (130 aa).

It belongs to the universal ribosomal protein uS9 family.

The sequence is that of Small ribosomal subunit protein uS9 from Halorhodospira halophila (strain DSM 244 / SL1) (Ectothiorhodospira halophila (strain DSM 244 / SL1)).